We begin with the raw amino-acid sequence, 1067 residues long: [F-actin]-monooxygenase MICAL1 (1067 aa).

The segment at Met-1 to Glu-489 is monooxygenase domain. Residues Cys-95, Glu-114–Arg-116, Arg-121–Asn-123, Phe-181, Tyr-293, and Asp-393 contribute to the FAD site. Phosphothreonine is present on Thr-475. The Calponin-homology (CH) domain maps to Ala-508–Lys-612. Residue Ser-617 is modified to Phosphoserine. Residues Ser-645–His-688 form a disordered region. The span at Arg-646 to Met-663 shows a compositional bias: basic and acidic residues. Residues Arg-646–Glu-666 adopt a coiled-coil conformation. Positions Glu-671–Pro-684 are enriched in pro residues. In terms of domain architecture, LIM zinc-binding spans Asp-695–Lys-757. Residues Cys-697, Cys-700, His-718, Cys-721, Cys-724, Cys-727, Cys-747, and His-750 each coordinate Zn(2+). Over residues Asp-755–Glu-766 the composition is skewed to basic and acidic residues. Disordered stretches follow at residues Asp-755 to Ser-838 and Lys-867 to Asp-886. The segment covering Pro-773–Gln-789 has biased composition (polar residues). A phosphoserine mark is found at Ser-872, Ser-875, and Ser-876. Over residues Ser-876–Asp-886 the composition is skewed to acidic residues. The segment at Gly-901–Gly-1067 is important for interaction with RAB8A. The bMERB domain occupies Lys-918 to Gly-1067. Coiled-coil stretches lie at residues Glu-919 to Ser-962 and Asn-999 to Arg-1027. Ser-1057 is subject to Phosphoserine.

The protein belongs to the Mical family. As to quaternary structure, interacts with STK38 and STK38L. Interacts with RAB1B, RAB8A, RAB10, RAB13, RAB15 and RAB35 (in their GTP-bound forms); binding to RAB1B is of low affinity compared to other Rab proteins; at least in case of RAB8A and RAB10 can bind 2 molecules of the Rab proteins simultaneously; ternary complex formation of RAB8A, RAB13 and MICAL1 is possible. Associates with the SH3 domain of NEDD9. Interacts with VIM and PLXNA3. Interacts with GRAF1/ARHGAP26, GRAF2/ARHGAP10, RAB8A, RAB8B and RAB10; may bind simultaneously to GRAFs and Rabs and connects GRAFs to Rabs. Does not interact with RAB1 and RAB11A. The cofactor is FAD. In terms of tissue distribution, expressed in the thymus, lung, spleen, kidney, testis and hematopoietic cells.

The protein resides in the cytoplasm. It is found in the cytoskeleton. The protein localises to the endosome membrane. It localises to the midbody. It catalyses the reaction L-methionyl-[F-actin] + NADPH + O2 + H(+) = L-methionyl-(R)-S-oxide-[F-actin] + NADP(+) + H2O. It carries out the reaction NADPH + O2 + H(+) = H2O2 + NADP(+). Its function is as follows. Monooxygenase that promotes depolymerization of F-actin by mediating oxidation of specific methionine residues on actin to form methionine-sulfoxide, resulting in actin filament disassembly and preventing repolymerization. In the absence of actin, it also functions as a NADPH oxidase producing H(2)O(2). Acts as a cytoskeletal regulator that connects NEDD9 to intermediate filaments. Also acts as a negative regulator of apoptosis via its interaction with STK38 and STK38L; acts by antagonizing STK38 and STK38L activation by MST1/STK4. Involved in regulation of lamina-specific connectivity in the nervous system such as the development of lamina-restricted hippocampal connections. Through redox regulation of the actin cytoskeleton controls the intracellular distribution of secretory vesicles containing L1/neurofascin/NgCAM family proteins in neurons, thereby regulating their cell surface levels. May act as Rab effector protein and play a role in vesicle trafficking. Promotes endosomal tubule extension by associating with RAB8 (RAB8A or RAB8B), RAB10 and GRAF (GRAF1/ARHGAP26 or GRAF2/ARHGAP10) on the endosomal membrane which may connect GRAFs to Rabs, thereby participating in neosynthesized Rab8-Rab10-Rab11-dependent protein export. The protein is [F-actin]-monooxygenase MICAL1 (MICAL1) of Homo sapiens (Human).